A 158-amino-acid polypeptide reads, in one-letter code: RING-H2 finger protein ATL66 (158 aa).

A helical membrane pass occupies residues 33–53 (LFFALALFSVVLFFALLTLYI). The segment at 107 to 149 (CCICLGGFEEGEKMKVLPPCSHCYHCECVDRWLKTESSCPLCR) adopts an RING-type; atypical zinc-finger fold.

This sequence belongs to the RING-type zinc finger family. ATL subfamily.

Its subcellular location is the membrane. It carries out the reaction S-ubiquitinyl-[E2 ubiquitin-conjugating enzyme]-L-cysteine + [acceptor protein]-L-lysine = [E2 ubiquitin-conjugating enzyme]-L-cysteine + N(6)-ubiquitinyl-[acceptor protein]-L-lysine.. It functions in the pathway protein modification; protein ubiquitination. This chain is RING-H2 finger protein ATL66 (ATL66), found in Arabidopsis thaliana (Mouse-ear cress).